Reading from the N-terminus, the 148-residue chain is MAGNRRIRVVVGGVFDILHVGHIHFLKMAKELGDELIVIVAHDETVKKRKGRPPINPAEDRAEVLRAIRYVDDVVIGEPGEISLELIKKLKPDVIALGPDQDFDCRTLKEKLRSIGLKVEVIRLPYLYKEDRAKTSKIIKRITEIFCD.

ATP is bound by residues 14–15 (VF), 19–22 (HVGH), and aspartate 100.

It belongs to the archaeal FAD synthase family. Homodimer. A divalent metal cation is required as a cofactor.

It carries out the reaction FMN + ATP + H(+) = FAD + diphosphate. It participates in cofactor biosynthesis; FAD biosynthesis; FAD from FMN: step 1/1. Catalyzes the transfer of the AMP portion of ATP to flavin mononucleotide (FMN) to produce flavin adenine dinucleotide (FAD) coenzyme. In Pyrococcus abyssi (strain GE5 / Orsay), this protein is FAD synthase.